We begin with the raw amino-acid sequence, 417 residues long: Serine hydroxymethyltransferase (417 aa).

Residues L121 and 125-127 (GHL) each bind (6S)-5,6,7,8-tetrahydrofolate. At K229 the chain carries N6-(pyridoxal phosphate)lysine. 355-357 (SPF) provides a ligand contact to (6S)-5,6,7,8-tetrahydrofolate.

Belongs to the SHMT family. Homodimer. Pyridoxal 5'-phosphate serves as cofactor.

The protein localises to the cytoplasm. The catalysed reaction is (6R)-5,10-methylene-5,6,7,8-tetrahydrofolate + glycine + H2O = (6S)-5,6,7,8-tetrahydrofolate + L-serine. It participates in one-carbon metabolism; tetrahydrofolate interconversion. Its pathway is amino-acid biosynthesis; glycine biosynthesis; glycine from L-serine: step 1/1. In terms of biological role, catalyzes the reversible interconversion of serine and glycine with tetrahydrofolate (THF) serving as the one-carbon carrier. This reaction serves as the major source of one-carbon groups required for the biosynthesis of purines, thymidylate, methionine, and other important biomolecules. Also exhibits THF-independent aldolase activity toward beta-hydroxyamino acids, producing glycine and aldehydes, via a retro-aldol mechanism. The chain is Serine hydroxymethyltransferase from Xylella fastidiosa (strain 9a5c).